Consider the following 814-residue polypeptide: MKRFINSTVTFSVTVTIAVIIFFLLSPVTSLGSGSTYAVVYGSDTVCALISGQPTQRILCYDTRLNINVTLNPGVSFSSIAAGDNFLCGIRSGGYSLLCWDNIGSYSPNRKRIYQNDNVLLETLSVGDKQICATVNGTNSLKCWRGSVSDQSKPPNERFRSISSGVGFSCGVSIRNNRILCWGTDPVKSNQIQTGFGNTPMVTISAGKSHACGLNTTGNLICIGNNDSGQLNVIAPDQPNLYSSSLSLGSNFTCAMRISNNSVVCWGGGAERFNNVTDSISFESISSGPGLICGLISSNLSIMCWNPTNFSRIFLPFPEVLPGPCVESSSSSLCSCGVYPQSDKLCSGTGSICKSCPIQFPASPPSQFPLPPPPPPPPPSPSTSSPPSKALTRGLLAFAIVGSVGAFAGICSVVYCLWTGVCLGKKKVHNSVQPTITRGGSNSRSNSSNSRSLSIRRQGSRMLSMRRQRSGTSSMKHADKAEEFSFSELASATGNFSLENKIGSGSFGVVYRGKLNDGREVAIKRGEVNAKMKKFQEKETAFDSEIAFLSRLHHKHLVRLVGYCEEREEKLLVYDYMKNGALYDHLHDKNNVEKHSSLINSWKMRIKIALDAARGIEYLHNYAVPPIIHRDIKSSNILLDSNWVARVSDFGLSLMGPVLGKDHNPYQRPTKAAGTVGYIDPEYYSLNVLTDKSDVYGLGVVLLELLTGKRAIFRNNGDVEEEEGCVPVHLVDYSVPAITADELSTILDPRVGSPELGEGDAVELVAYTAMHCVNAEGRNRPTMTDIVGNLERALDLCGDSHGSISSGICSIVSD.

A signal peptide spans 1–30 (MKRFINSTVTFSVTVTIAVIIFFLLSPVTS). N-linked (GlcNAc...) asparagine glycosylation is found at Asn-6, Asn-68, Asn-136, Asn-215, Asn-226, Asn-251, Asn-260, Asn-275, Asn-299, and Asn-309. The Extracellular segment spans residues 31–393 (LGSGSTYAVV…SSPPSKALTR (363 aa)). A compositionally biased stretch (pro residues) spans 366 to 381 (SQFPLPPPPPPPPPSP). The disordered stretch occupies residues 366–388 (SQFPLPPPPPPPPPSPSTSSPPS). The chain crosses the membrane as a helical span at residues 394–414 (GLLAFAIVGSVGAFAGICSVV). Topologically, residues 415–814 (YCLWTGVCLG…SSGICSIVSD (400 aa)) are cytoplasmic. The interval 433-478 (QPTITRGGSNSRSNSSNSRSLSIRRQGSRMLSMRRQRSGTSSMKHA) is disordered. A compositionally biased stretch (low complexity) spans 441–457 (SNSRSNSSNSRSLSIRR). The region spanning 496–794 (FSLENKIGSG…DIVGNLERAL (299 aa)) is the Protein kinase domain. ATP-binding positions include 502–510 (IGSGSFGVV) and Lys-524. Residue Asp-631 is the Proton acceptor of the active site.

It belongs to the protein kinase superfamily. Ser/Thr protein kinase family. In terms of assembly, homodimer. Expressed in roots, leaves, shoot apical meristems (SAM), and floral buds.

Its subcellular location is the membrane. It carries out the reaction L-seryl-[protein] + ATP = O-phospho-L-seryl-[protein] + ADP + H(+). It catalyses the reaction L-threonyl-[protein] + ATP = O-phospho-L-threonyl-[protein] + ADP + H(+). Serine/threonine-protein kinase. The polypeptide is Putative serine/threonine-protein kinase-like protein CCR3 (CCR3) (Arabidopsis thaliana (Mouse-ear cress)).